Consider the following 146-residue polypeptide: Transcriptional regulator MraZ (146 aa).

2 SpoVT-AbrB domains span residues 5 to 52 and 81 to 124; these read SAAL…PRAE and AAEI…KEES.

It belongs to the MraZ family. Forms oligomers.

The protein resides in the cytoplasm. Its subcellular location is the nucleoid. The chain is Transcriptional regulator MraZ from Alcanivorax borkumensis (strain ATCC 700651 / DSM 11573 / NCIMB 13689 / SK2).